The following is a 93-amino-acid chain: Small ribosomal subunit protein uS19 (93 aa).

The protein belongs to the universal ribosomal protein uS19 family.

Its function is as follows. Protein S19 forms a complex with S13 that binds strongly to the 16S ribosomal RNA. This chain is Small ribosomal subunit protein uS19 (rpsS), found in Mycobacterium leprae (strain TN).